A 360-amino-acid chain; its full sequence is Histidinol-phosphate aminotransferase (360 aa).

N6-(pyridoxal phosphate)lysine is present on K211.

This sequence belongs to the class-II pyridoxal-phosphate-dependent aminotransferase family. Histidinol-phosphate aminotransferase subfamily. Homodimer. Requires pyridoxal 5'-phosphate as cofactor.

The enzyme catalyses L-histidinol phosphate + 2-oxoglutarate = 3-(imidazol-4-yl)-2-oxopropyl phosphate + L-glutamate. Its pathway is amino-acid biosynthesis; L-histidine biosynthesis; L-histidine from 5-phospho-alpha-D-ribose 1-diphosphate: step 7/9. The sequence is that of Histidinol-phosphate aminotransferase from Sodalis glossinidius (strain morsitans).